The following is a 291-amino-acid chain: ATP synthase gamma chain (291 aa).

This sequence belongs to the ATPase gamma chain family. As to quaternary structure, F-type ATPases have 2 components, CF(1) - the catalytic core - and CF(0) - the membrane proton channel. CF(1) has five subunits: alpha(3), beta(3), gamma(1), delta(1), epsilon(1). CF(0) has three main subunits: a, b and c.

It localises to the cell inner membrane. Produces ATP from ADP in the presence of a proton gradient across the membrane. The gamma chain is believed to be important in regulating ATPase activity and the flow of protons through the CF(0) complex. The protein is ATP synthase gamma chain of Sinorhizobium medicae (strain WSM419) (Ensifer medicae).